The following is a 313-amino-acid chain: 4-hydroxy-3-methylbut-2-enyl diphosphate reductase (313 aa).

Cys12 contacts [4Fe-4S] cluster. Residues His41 and His74 each coordinate (2E)-4-hydroxy-3-methylbut-2-enyl diphosphate. Dimethylallyl diphosphate-binding residues include His41 and His74. Isopentenyl diphosphate is bound by residues His41 and His74. [4Fe-4S] cluster is bound at residue Cys96. His124 contributes to the (2E)-4-hydroxy-3-methylbut-2-enyl diphosphate binding site. A dimethylallyl diphosphate-binding site is contributed by His124. Position 124 (His124) interacts with isopentenyl diphosphate. Residue Glu126 is the Proton donor of the active site. Residue Thr167 coordinates (2E)-4-hydroxy-3-methylbut-2-enyl diphosphate. A [4Fe-4S] cluster-binding site is contributed by Cys197. Residues Ser225, Ser226, Asn227, and Ser269 each contribute to the (2E)-4-hydroxy-3-methylbut-2-enyl diphosphate site. 4 residues coordinate dimethylallyl diphosphate: Ser225, Ser226, Asn227, and Ser269. Isopentenyl diphosphate-binding residues include Ser225, Ser226, Asn227, and Ser269.

The protein belongs to the IspH family. The cofactor is [4Fe-4S] cluster.

The enzyme catalyses isopentenyl diphosphate + 2 oxidized [2Fe-2S]-[ferredoxin] + H2O = (2E)-4-hydroxy-3-methylbut-2-enyl diphosphate + 2 reduced [2Fe-2S]-[ferredoxin] + 2 H(+). The catalysed reaction is dimethylallyl diphosphate + 2 oxidized [2Fe-2S]-[ferredoxin] + H2O = (2E)-4-hydroxy-3-methylbut-2-enyl diphosphate + 2 reduced [2Fe-2S]-[ferredoxin] + 2 H(+). The protein operates within isoprenoid biosynthesis; dimethylallyl diphosphate biosynthesis; dimethylallyl diphosphate from (2E)-4-hydroxy-3-methylbutenyl diphosphate: step 1/1. It functions in the pathway isoprenoid biosynthesis; isopentenyl diphosphate biosynthesis via DXP pathway; isopentenyl diphosphate from 1-deoxy-D-xylulose 5-phosphate: step 6/6. In terms of biological role, catalyzes the conversion of 1-hydroxy-2-methyl-2-(E)-butenyl 4-diphosphate (HMBPP) into a mixture of isopentenyl diphosphate (IPP) and dimethylallyl diphosphate (DMAPP). Acts in the terminal step of the DOXP/MEP pathway for isoprenoid precursor biosynthesis. This chain is 4-hydroxy-3-methylbut-2-enyl diphosphate reductase, found in Baumannia cicadellinicola subsp. Homalodisca coagulata.